Consider the following 216-residue polypeptide: LexA repressor (216 aa).

A DNA-binding region (H-T-H motif) is located at residues Arg-28 to Arg-48. Catalysis depends on for autocatalytic cleavage activity residues Ser-134 and Lys-171.

This sequence belongs to the peptidase S24 family. In terms of assembly, homodimer.

The catalysed reaction is Hydrolysis of Ala-|-Gly bond in repressor LexA.. Functionally, represses a number of genes involved in the response to DNA damage (SOS response), including recA and lexA. In the presence of single-stranded DNA, RecA interacts with LexA causing an autocatalytic cleavage which disrupts the DNA-binding part of LexA, leading to derepression of the SOS regulon and eventually DNA repair. The polypeptide is LexA repressor (Ralstonia pickettii (strain 12J)).